A 197-amino-acid chain; its full sequence is Probable nicotinate-nucleotide adenylyltransferase (197 aa).

Belongs to the NadD family.

It carries out the reaction nicotinate beta-D-ribonucleotide + ATP + H(+) = deamido-NAD(+) + diphosphate. It functions in the pathway cofactor biosynthesis; NAD(+) biosynthesis; deamido-NAD(+) from nicotinate D-ribonucleotide: step 1/1. In terms of biological role, catalyzes the reversible adenylation of nicotinate mononucleotide (NaMN) to nicotinic acid adenine dinucleotide (NaAD). The polypeptide is Probable nicotinate-nucleotide adenylyltransferase (Borrelia garinii subsp. bavariensis (strain ATCC BAA-2496 / DSM 23469 / PBi) (Borreliella bavariensis)).